The primary structure comprises 197 residues: Ycf20-like protein (197 aa).

3 helical membrane passes run 113–133 (MKIFLLLLGFYTANALATILG), 138–158 (WDVLVAGIVVAAIEGIGMLMY), and 173–193 (FVVFMNFWKAGVCLGLFVDAF).

It belongs to the ycf20 family.

Its subcellular location is the membrane. The polypeptide is Ycf20-like protein (Arabidopsis thaliana (Mouse-ear cress)).